The sequence spans 542 residues: Peptide chain release factor 3 (542 aa).

A tr-type G domain is found at 14–283; it reads ELRRNFAIIS…YFLEYALKPG (270 aa). Residues 23 to 30, 91 to 95, and 145 to 148 each bind GTP; these read SHPDAGKT, DTPGH, and NKLD.

It belongs to the TRAFAC class translation factor GTPase superfamily. Classic translation factor GTPase family. PrfC subfamily.

It is found in the cytoplasm. Functionally, increases the formation of ribosomal termination complexes and stimulates activities of RF-1 and RF-2. It binds guanine nucleotides and has strong preference for UGA stop codons. It may interact directly with the ribosome. The stimulation of RF-1 and RF-2 is significantly reduced by GTP and GDP, but not by GMP. The chain is Peptide chain release factor 3 from Nostoc punctiforme (strain ATCC 29133 / PCC 73102).